A 107-amino-acid chain; its full sequence is MNDSEFHQLADQLMLYIEETLDGFTGDSDIDYETNGGVMTLTFENGSKIVINRQEPLHQVWLATKAGGYHFNYRDGHWYCSRSGEEFFAKLSEAATTQAGEEVSFSE.

This sequence belongs to the frataxin family.

Functionally, involved in iron-sulfur (Fe-S) cluster assembly. May act as a regulator of Fe-S biogenesis. This chain is Iron-sulfur cluster assembly protein CyaY, found in Yersinia pseudotuberculosis serotype O:1b (strain IP 31758).